The primary structure comprises 1027 residues: INO80 complex subunit D (1027 aa).

A Glycyl lysine isopeptide (Lys-Gly) (interchain with G-Cter in SUMO2) cross-link involves residue K87. The residue at position 132 (S132) is a Phosphoserine. Disordered regions lie at residues 193 to 278 (HFSP…VDPP), 519 to 574 (RGDN…LSMP), 813 to 850 (RQQYSSDHSHSSPHGSHYDSEHVPSPYSDHITSPHTTS), 914 to 969 (LSTS…TSPK), and 982 to 1027 (QLSS…PSPN). A compositionally biased stretch (low complexity) spans 201-216 (SQQQPPQQHSHLSPLS). Positions 229–257 (VCKSPQPQNTSLPMQGVAPTTHTIAQARQ) are enriched in polar residues. Over residues 525-559 (KVQHQQQRKPRKKTKPPALTKKHKKKRRRGPRRPQ) the composition is skewed to basic residues. Low complexity predominate over residues 914–932 (LSTSLSTPPTTSNSETTQP). Residues 937–954 (VTPSSSSVLPGLPQTSFS) are compositionally biased toward polar residues. Positions 1001–1027 (APPTGFTVTGATATSTNNASSPFPSPN) are enriched in low complexity.

The protein belongs to the INO80D family. In terms of assembly, component of the chromatin remodeling INO80 complex; specifically part of a complex module associated with the N-terminus of INO80.

It is found in the nucleus. Its function is as follows. Putative regulatory component of the chromatin remodeling INO80 complex which is involved in transcriptional regulation, DNA replication and probably DNA repair. The sequence is that of INO80 complex subunit D from Homo sapiens (Human).